The chain runs to 401 residues: Probable plasmid-partitioning protein ParB (401 aa).

Positions 232 to 272 are disordered; the sequence is KTRGKENARDKAAAVKEEVKPSKKPKADNGEKTPKGRSHEE.

It belongs to the ParB family.

This chain is Probable plasmid-partitioning protein ParB, found in Xylella fastidiosa (strain 9a5c).